The chain runs to 517 residues: Gallate 1-beta-glucosyltransferase 84A24 (517 aa).

The active-site Proton acceptor is the His19. Position 19 (His19) interacts with an anthocyanidin. 6 residues coordinate UDP-alpha-D-glucose: Gln344, His359, Trp362, Asn363, Ser364, and Glu367. An an anthocyanidin-binding site is contributed by Gly382. UDP-alpha-D-glucose is bound by residues Asp383 and Gln384.

It belongs to the UDP-glycosyltransferase family. Highly expressed in leaf. Also expressed in peel, stem, root and aril.

It is found in the cytoplasm. It catalyses the reaction 3,4,5-trihydroxybenzoate + UDP-alpha-D-glucose = 1-O-galloyl-beta-D-glucose + UDP. The enzyme catalyses 3,4-dihydroxybenzoate + UDP-alpha-D-glucose = 1-O-(3,4-dihydroxy-benzoyl)-beta-D-glucose + UDP. The catalysed reaction is 4-hydroxybenzoate + UDP-alpha-D-glucose = 4-(beta-D-glucosyloxy)benzoate + UDP + H(+). It carries out the reaction (E)-cinnamate + UDP-alpha-D-glucose = 1-O-(trans-cinnamoyl)-beta-D-glucose + UDP. It catalyses the reaction (E)-sinapate + UDP-alpha-D-glucose = 1-O-(trans-sinapoyl)-beta-D-glucose + UDP. The enzyme catalyses (E)-4-coumarate + UDP-alpha-D-glucose = 1-O-(trans-4-coumaroyl)-beta-D-glucose + UDP. The catalysed reaction is (E)-caffeate + UDP-alpha-D-glucose = 1-O-[(E)-caffeoyl]-beta-D-glucose + UDP. It carries out the reaction (E)-ferulate + UDP-alpha-D-glucose = 1-O-[(E)-feruloyl]-beta-D-glucose + UDP. It catalyses the reaction genistein + UDP-alpha-D-glucose = genistein 7-O-beta-D-glucoside + UDP + H(+). The enzyme catalyses apigenin + UDP-alpha-D-glucose = apigenin 7-O-beta-D-glucoside + UDP + H(+). The catalysed reaction is luteolin + UDP-alpha-D-glucose = luteolin 7-O-beta-D-glucoside + UDP + H(+). Its function is as follows. Glucosyltransferase that catalyzes the formation of 1-O-beta-D-glucose esters with hydroxybenzoic acids and cinnamic acid including its derivatives as preferred glucosyl acceptors. Has significant activity with gallic acid (3,4,5-trihydroxybenzoic acid), 3,4-dihydroxybenzoic acid, 4-hydroxybenzoic acid, cinnamic acid, sinapic acid, coumaric acid, caffeic acid and ferulic acid in vitro. Gallic acid is the predicted native substrate of the enzyme, which thus catalyzes the formation of 1-O-galloyl-beta-D-glucose, the first committed step of hydrolyzable tannins (HTs) biosynthesis, with punicalagin isomers being the major HTs of pomegranate. Catalyzes the formation of flavonoid glucosides with genistein, apigenin and luteolin in vitro. Has low activity with benzoic acid, 2-hydroxybenzoic acid, 3-hydroxybenzoic acid, 2,4-dihydroxybenzoic acid, naringenin and quercetin. No activity with catechol, resveratrol, chlorogenic acid, catechin and epicatechin (building blocks of proanthocyanidins) or cyanidin, delphinidin and pelargonidin (the three anthocyanidins). This is Gallate 1-beta-glucosyltransferase 84A24 from Punica granatum (Pomegranate).